Here is a 757-residue protein sequence, read N- to C-terminus: Probable serine/threonine-protein kinase pknA2 (757 aa).

The Protein kinase domain occupies 14–274 (YRIVRNIAEG…DGAAAAEELS (261 aa)). ATP contacts are provided by residues 20–28 (IAEGGMATV) and Lys-43. Asp-140 acts as the Proton acceptor in catalysis. A disordered region spans residues 344-387 (DTGGAADVNPPAPPVAPTTALDSSTPADASAPHKTQIMAQSGSE). PASTA domains follow at residues 466-539 (DANA…VVSK), 545-614 (TIPK…TLSK), and 615-681 (GPMP…VISK).

It belongs to the protein kinase superfamily. Ser/Thr protein kinase family.

It carries out the reaction L-seryl-[protein] + ATP = O-phospho-L-seryl-[protein] + ADP + H(+). The catalysed reaction is L-threonyl-[protein] + ATP = O-phospho-L-threonyl-[protein] + ADP + H(+). This is Probable serine/threonine-protein kinase pknA2 (pknA2) from Bifidobacterium longum (strain NCC 2705).